We begin with the raw amino-acid sequence, 362 residues long: 3-isopropylmalate dehydrogenase (362 aa).

Residue 78–91 coordinates NAD(+); that stretch reads GPKWEHLAPNDQPE. Substrate-binding residues include R99, R109, R138, and D227. Mg(2+) is bound by residues D227, D251, and D255. 285–297 provides a ligand contact to NAD(+); it reads GSAPDIAGKNIAN.

Belongs to the isocitrate and isopropylmalate dehydrogenases family. LeuB type 1 subfamily. Homodimer. Mg(2+) serves as cofactor. Mn(2+) is required as a cofactor.

Its subcellular location is the cytoplasm. The catalysed reaction is (2R,3S)-3-isopropylmalate + NAD(+) = 4-methyl-2-oxopentanoate + CO2 + NADH. The protein operates within amino-acid biosynthesis; L-leucine biosynthesis; L-leucine from 3-methyl-2-oxobutanoate: step 3/4. Functionally, catalyzes the oxidation of 3-carboxy-2-hydroxy-4-methylpentanoate (3-isopropylmalate) to 3-carboxy-4-methyl-2-oxopentanoate. The product decarboxylates to 4-methyl-2 oxopentanoate. The chain is 3-isopropylmalate dehydrogenase from Photobacterium profundum (strain SS9).